The primary structure comprises 260 residues: Flagellar basal-body rod protein FlgG (260 aa).

Belongs to the flagella basal body rod proteins family. As to quaternary structure, the basal body constitutes a major portion of the flagellar organelle and consists of four rings (L,P,S, and M) mounted on a central rod. The rod consists of about 26 subunits of FlgG in the distal portion, and FlgB, FlgC and FlgF are thought to build up the proximal portion of the rod with about 6 subunits each.

It localises to the bacterial flagellum basal body. The polypeptide is Flagellar basal-body rod protein FlgG (flgG) (Buchnera aphidicola subsp. Acyrthosiphon pisum (strain APS) (Acyrthosiphon pisum symbiotic bacterium)).